Here is a 486-residue protein sequence, read N- to C-terminus: Uridine/cytidine kinase UKL1, chloroplastic (486 aa).

A chloroplast-targeting transit peptide spans 1–47; it reads MPEDSSSLDYAMEKASGPHFSGLRFDGLLSSSPPNSSVVSSLRSAVS. Residues 31–54 show a composition bias toward low complexity; that stretch reads SSPPNSSVVSSLRSAVSSSSPSSS. Positions 31–67 are disordered; sequence SSPPNSSVVSSLRSAVSSSSPSSSDPEAPKQPFIIGV. The tract at residues 59–264 is uridine kinase; it reads PKQPFIIGVS…ITQHIHTKLG (206 aa). The tract at residues 274–486 is uracil phosphoribosyltransferase; it reads NVYVIQSTFQ…RYFGTDEEDQ (213 aa). Residues K298, R307, and 341–344 each bind GTP; that span reads CKKL. 5-phospho-alpha-D-ribose 1-diphosphate contacts are provided by R351 and R376. R396 serves as a coordination point for GTP. 5-phospho-alpha-D-ribose 1-diphosphate is bound by residues D402, 407–410, and E473; that span reads TGNS. Residue 472-474 participates in uracil binding; it reads GEF.

In the N-terminal section; belongs to the uridine kinase family. The protein in the C-terminal section; belongs to the UPRTase family. As to expression, expressed in roots, leaves and stems.

It localises to the plastid. It is found in the chloroplast. Its subcellular location is the cytoplasm. The catalysed reaction is cytidine + ATP = CMP + ADP + H(+). It catalyses the reaction uridine + ATP = UMP + ADP + H(+). The protein operates within pyrimidine metabolism; CTP biosynthesis via salvage pathway; CTP from cytidine: step 1/3. It functions in the pathway pyrimidine metabolism; UMP biosynthesis via salvage pathway; UMP from uridine: step 1/1. Its function is as follows. Involved in the pyrimidine salvage pathway. Phosphorylates uridine to uridine monophosphate (UMP). Phosphorylates cytidine to cytidine monophosphate (CMP). Does not possess uracil phosphoribosyltransferase (UPRTase) activity that catalyzes the conversion of uracil and 5-phospho-alpha-D-ribose 1-diphosphate (PRPP) to UMP and diphosphate. This chain is Uridine/cytidine kinase UKL1, chloroplastic, found in Arabidopsis thaliana (Mouse-ear cress).